A 236-amino-acid chain; its full sequence is Probable pseudouridine-5'-phosphatase YKL033W-A (236 aa).

It belongs to the HAD-like hydrolase superfamily.

The catalysed reaction is XMP + H2O = xanthosine + phosphate. It catalyses the reaction psi-UMP + H2O = pseudouridine + phosphate. Its function is as follows. Nucleotidase with XMP as the best in vitro substrate. Low catalytic efficiencies of YKL033W-A observed with XMP and other substrates suggest that these could be secondary activities for this protein, and its primary substrate is not yet identified. May possess pseudouridine 5'-phosphatase activity and together with dTTP/UTP pyrophosphatase YOR111W might constitute a pathway for the detoxification of pseudouridine 5'-triphosphate (Psi-UTP) and -monophosphate (Psi-UMP). This chain is Probable pseudouridine-5'-phosphatase YKL033W-A, found in Saccharomyces cerevisiae (strain ATCC 204508 / S288c) (Baker's yeast).